The primary structure comprises 235 residues: Glucosamine-6-phosphate deaminase (235 aa).

Asp62 serves as the catalytic Proton acceptor; for enolization step. Asn128 (for ring-opening step) is an active-site residue. His130 acts as the Proton acceptor; for ring-opening step in catalysis. Glu135 serves as the catalytic For ring-opening step.

The protein belongs to the glucosamine/galactosamine-6-phosphate isomerase family. NagB subfamily.

The catalysed reaction is alpha-D-glucosamine 6-phosphate + H2O = beta-D-fructose 6-phosphate + NH4(+). Its pathway is amino-sugar metabolism; N-acetylneuraminate degradation; D-fructose 6-phosphate from N-acetylneuraminate: step 5/5. Its function is as follows. Catalyzes the reversible isomerization-deamination of glucosamine 6-phosphate (GlcN6P) to form fructose 6-phosphate (Fru6P) and ammonium ion. This chain is Glucosamine-6-phosphate deaminase, found in Streptococcus pneumoniae serotype 2 (strain D39 / NCTC 7466).